Consider the following 298-residue polypeptide: tRNA uridine(34) hydroxylase (298 aa).

The Rhodanese domain occupies 123–217; the sequence is QNPDVTLVDT…YLEEIPVAES (95 aa). C177 serves as the catalytic Cysteine persulfide intermediate.

This sequence belongs to the TrhO family.

The catalysed reaction is uridine(34) in tRNA + AH2 + O2 = 5-hydroxyuridine(34) in tRNA + A + H2O. Functionally, catalyzes oxygen-dependent 5-hydroxyuridine (ho5U) modification at position 34 in tRNAs. This is tRNA uridine(34) hydroxylase from Picosynechococcus sp. (strain ATCC 27264 / PCC 7002 / PR-6) (Agmenellum quadruplicatum).